Consider the following 364-residue polypeptide: MTVTGIIAEFNPFHNGHKYLLEQASGLKIIAMSGNFVQRGEPAIVDKWTRAQMALEAGADLVLELPFLVSVQAADFFAKGAVDILERLGIDYLMFGTEEVLDYESISKVYGEKAEQMEAYLAGLPDSLSYPQKTQAMWQEFAGLNFSGSTPNHILGLAYAKAVAGRDIKLCSIQRQGAGYHSLSANQEFASATALRQNLDQPDFLKKFTPAHHLLETAPKVIWSDLFSYLRYQIVTCPDLTNFYQVNQELAVRIRVALKSSETIEELVEQVATKRYTKARVRRLLTYILVGARQEELPSGVHILGFSEQGRQHLSQLKGKVELVSRIGKDPWDSLTQQADKVYQLGNPALREQNFGRVPIMKGK.

Residues 7–20, Gly-96, Asn-152, and Arg-175 contribute to the ATP site; that span reads IAEF…HKYL.

Belongs to the TmcAL family.

The protein resides in the cytoplasm. The enzyme catalyses cytidine(34) in elongator tRNA(Met) + acetate + ATP = N(4)-acetylcytidine(34) in elongator tRNA(Met) + AMP + diphosphate. Its function is as follows. Catalyzes the formation of N(4)-acetylcytidine (ac(4)C) at the wobble position of elongator tRNA(Met), using acetate and ATP as substrates. First activates an acetate ion to form acetyladenylate (Ac-AMP) and then transfers the acetyl group to tRNA to form ac(4)C34. This Streptococcus sanguinis (strain SK36) protein is tRNA(Met) cytidine acetate ligase.